Reading from the N-terminus, the 103-residue chain is N(4)-acetylcytidine amidohydrolase (103 aa).

The ASCH domain maps to 6–100 (ITFFQRFQDD…GESQFYVIEF (95 aa)). Lys-21 serves as the catalytic Proton acceptor. Residue Thr-24 is the Nucleophile of the active site. The active-site Proton donor is the Glu-74.

Belongs to the N(4)-acetylcytidine amidohydrolase family.

The catalysed reaction is N(4)-acetylcytidine + H2O = cytidine + acetate + H(+). The enzyme catalyses N(4)-acetyl-2'-deoxycytidine + H2O = 2'-deoxycytidine + acetate + H(+). It carries out the reaction N(4)-acetylcytosine + H2O = cytosine + acetate + H(+). Catalyzes the hydrolysis of N(4)-acetylcytidine (ac4C). The sequence is that of N(4)-acetylcytidine amidohydrolase from Klebsiella pneumoniae subsp. pneumoniae (strain ATCC 700721 / MGH 78578).